Consider the following 485-residue polypeptide: MTITPQQLIALLPLLIVGLTVVVVMLSIAWRRNHFLNATLSVLGLNAALVSLWFVGQNGAMDVTPLIRVDGYAMLYTGLVLLASLATCTFAYPWLEGYKDNKEEFYLLVLIAALGGILLAGANHLAALFLGIELISLPLFGLVGYAFRQKRSLEASIKYTILSAAASSFLLFGMALVYANSGNLSFLALGKSLADNMLHEPLLLAGLGLMIVGLGFKLSLVPFHLWTPDVYQGAPAPVSTFLATASKIAIFGVVMRLFLYMPVGNSEAVRVVLGLIAFASIIFGNLMALSQTNIKRLLGYSSISHLGYLLVALIALQSGEMSMEAVGVYLAGYLFSSLGAFGVVSLMSSPYRGPDADSLFSYRGLFWHRPILSAVMTVMMLSLAGIPMTLGFIGKFYVLAVGVHAHLWWLVAAVVVGSAIGLYYYLRVAVSLYLSAPEQLNRDAPSNWQYSAGGIVVLISALLVLVLGIWPQPLISIVQLATPLM.

14 helical membrane-spanning segments follow: residues Leu-8 to Ile-28, Phe-35 to Val-55, Leu-75 to Leu-95, Phe-105 to Leu-125, Ala-127 to Phe-147, Tyr-159 to Ala-179, Leu-203 to Phe-223, Pro-235 to Met-255, Val-271 to Gln-291, Leu-297 to Gln-317, Val-326 to Leu-346, Ala-374 to Gly-394, Trp-408 to Val-430, and Ile-455 to Ile-475.

Belongs to the complex I subunit 2 family. NDH-1 is composed of 13 different subunits. Subunits NuoA, H, J, K, L, M, N constitute the membrane sector of the complex.

It localises to the cell inner membrane. The catalysed reaction is a quinone + NADH + 5 H(+)(in) = a quinol + NAD(+) + 4 H(+)(out). NDH-1 shuttles electrons from NADH, via FMN and iron-sulfur (Fe-S) centers, to quinones in the respiratory chain. The immediate electron acceptor for the enzyme in this species is believed to be ubiquinone. Couples the redox reaction to proton translocation (for every two electrons transferred, four hydrogen ions are translocated across the cytoplasmic membrane), and thus conserves the redox energy in a proton gradient. This Klebsiella pneumoniae subsp. pneumoniae (strain ATCC 700721 / MGH 78578) protein is NADH-quinone oxidoreductase subunit N.